The chain runs to 349 residues: N-acetyltaurine hydrolase (349 aa).

Residues His26, His28, Glu169, His201, His230, and Asp298 each contribute to the a divalent metal cation site.

The protein belongs to the metallo-dependent hydrolases superfamily. Phosphotriesterase family. It depends on a divalent metal cation as a cofactor.

It is found in the cytoplasm. Its subcellular location is the cytosol. The catalysed reaction is N-acetyltaurine + H2O = taurine + acetate. It catalyses the reaction N-propanoyltaurine + H2O = propanoate + taurine. It carries out the reaction N-acetyl-L-methionine + H2O = L-methionine + acetate. The enzyme catalyses N-acetyl-L-isoleucine + H2O = L-isoleucine + acetate. The catalysed reaction is N-acetyl-L-leucine + H2O = L-leucine + acetate. It catalyses the reaction N-acetyl-L-valine + H2O = L-valine + acetate. In terms of biological role, N-acetyltaurine hydrolase that regulates feeding by catalyzing the hydrolysis of N-acetyltaurine into taurine and acetate. N-acetyltaurine has anorexigenic and anti-obesity effects that are dependent on GFRAL receptor and GDF15. PTER also acts on other N-acetyl amino acids (Met, Ile, Leu, Val) and N-propionyltaurine, but at lower rates. This Pongo abelii (Sumatran orangutan) protein is N-acetyltaurine hydrolase.